We begin with the raw amino-acid sequence, 341 residues long: MRIAIFIFGILLTSCFSKNGIESGSSKIKISMLVDGVLDDKSFNSSANEALLRLKKDFPENIEKVFSSAVSGVYSSYVSDLDNLKMNGSGLIWLVGYMLADVSLSVSLENPEINYGIIDPIYGDDVQIPKNLIGVVFRIEQGAFLAGYIAAKKSVSSKIGFIGGVKGDIVDAFRYGYEAGAKYANKGIEIVSEYSNSFSDIDIARVMANKMYSKGIDIIHFAAGLAGVGVIEAAKELGDGYYVIGADQDQSHLAPKNFITSVIKNVGDALYLITSESLKNDNVWEGGKIVQMGLRDGVVGLSNANEFEYIKDLERKIINKEIIVPCNQEGYEIFIKQILKL.

The N-terminal stretch at 1-14 (MRIAIFIFGILLTS) is a signal peptide. C15 carries N-palmitoyl cysteine lipidation. C15 carries S-diacylglycerol cysteine lipidation.

This sequence belongs to the BMP lipoprotein family. As to quaternary structure, monomer.

The protein localises to the cell inner membrane. Functionally, may be part of an ABC-type nucleoside uptake system involved in the purine salvage pathway. The protein is Basic membrane protein B (bmpB) of Borreliella afzelii (strain PKo) (Borrelia afzelii).